The chain runs to 202 residues: Oligoribonuclease (202 aa).

Residues 2 to 166 form the Exonuclease domain; that stretch reads LVWIDCEMTG…ADIQESIEEL (165 aa). Tyr-123 is an active-site residue.

It belongs to the oligoribonuclease family.

Its subcellular location is the cytoplasm. 3'-to-5' exoribonuclease specific for small oligoribonucleotides. This chain is Oligoribonuclease, found in Cutibacterium acnes (strain DSM 16379 / KPA171202) (Propionibacterium acnes).